We begin with the raw amino-acid sequence, 487 residues long: MKYKDLREFLTLLEGQGELVRIKQEIDPYLEMAEISDRTLRKGGPAILFEKPKGYRMPVLCNLFGTPKRVALGMGQEDTHALRELGKLLAFLKEPEPPKGFKELIGQLPQWKQVLNMPSKVLGKADCQQVVLSGDEVDLYKLPIMHCHEGDVAPLVTWGLTVTQGPYKKRQNLGIYRQQLIGKNKLIMRWLSHRGGALDFHEWKEANPDKPFPVSVAIGADPATILAAVTPIPDTLSEYAFAGLLRGQKTEVTKSISNDLEIPASAEIVLEGYIDPNETALEGPYGDHTGYYNEQEYFPVFTVTHITMRRDAIYHSTYTGRPPDEPAVLGEALNEVFIPILQKQFPEIVDFYLPPEGCSYRLAVVTIKKQYAGHAKRVMMGVWSFLRQFMYTKFVIVCDDDVNARDWKDVIWAITTRCDPIRDTTLIDHTPIDYLDFASPIAGLGSKMGIDATNKWPGETSREWGTPIKKDPNVVKLVDEIWDQLGL.

Asn172 contacts Mn(2+). Prenylated FMN is bound by residues 175–177 (IYR), 189–191 (RWL), and 194–195 (RG). A Mn(2+)-binding site is contributed by Glu238. The Proton donor role is filled by Asp287.

This sequence belongs to the UbiD family. In terms of assembly, homohexamer. It depends on prenylated FMN as a cofactor. Mn(2+) is required as a cofactor.

Its subcellular location is the cell membrane. It catalyses the reaction a 4-hydroxy-3-(all-trans-polyprenyl)benzoate + H(+) = a 2-(all-trans-polyprenyl)phenol + CO2. It functions in the pathway cofactor biosynthesis; ubiquinone biosynthesis. In terms of biological role, catalyzes the decarboxylation of 3-octaprenyl-4-hydroxy benzoate to 2-octaprenylphenol, an intermediate step in ubiquinone biosynthesis. The protein is 3-octaprenyl-4-hydroxybenzoate carboxy-lyase of Actinobacillus pleuropneumoniae serotype 3 (strain JL03).